The following is a 182-amino-acid chain: Ribosome maturation factor RimM (182 aa).

Residues 102–182 (EEGDYYWKDL…TIEVDWDPGF (81 aa)) form the PRC barrel domain.

This sequence belongs to the RimM family. In terms of assembly, binds ribosomal protein uS19.

The protein resides in the cytoplasm. An accessory protein needed during the final step in the assembly of 30S ribosomal subunit, possibly for assembly of the head region. Essential for efficient processing of 16S rRNA. May be needed both before and after RbfA during the maturation of 16S rRNA. It has affinity for free ribosomal 30S subunits but not for 70S ribosomes. In Salmonella enteritidis PT4 (strain P125109), this protein is Ribosome maturation factor RimM.